Consider the following 363-residue polypeptide: tRNA N6-adenosine threonylcarbamoyltransferase (363 aa).

Residues histidine 121 and histidine 125 each coordinate Fe cation. Residues 143–147, aspartate 176, glycine 189, and asparagine 287 contribute to the substrate site; that span reads LASGG. Fe cation is bound at residue aspartate 315.

It belongs to the KAE1 / TsaD family. It depends on Fe(2+) as a cofactor.

It is found in the cytoplasm. The enzyme catalyses L-threonylcarbamoyladenylate + adenosine(37) in tRNA = N(6)-L-threonylcarbamoyladenosine(37) in tRNA + AMP + H(+). Functionally, required for the formation of a threonylcarbamoyl group on adenosine at position 37 (t(6)A37) in tRNAs that read codons beginning with adenine. Is involved in the transfer of the threonylcarbamoyl moiety of threonylcarbamoyl-AMP (TC-AMP) to the N6 group of A37, together with TsaE and TsaB. TsaD likely plays a direct catalytic role in this reaction. The chain is tRNA N6-adenosine threonylcarbamoyltransferase from Rhodopseudomonas palustris (strain HaA2).